Here is a 987-residue protein sequence, read N- to C-terminus: Pentatricopeptide repeat-containing protein At1g06710, mitochondrial (987 aa).

The transit peptide at 1-42 directs the protein to the mitochondrion; it reads MNKTVVRCLLSRSHHPLIHFSTNLSLLHRVFTCSRYLTARFM. 22 PPR repeats span residues 164–198, 199–233, 234–268, 269–299, 301–335, 336–370, 371–405, 406–446, 447–481, 482–516, 517–551, 552–586, 587–621, 638–672, 673–707, 708–742, 743–777, 778–812, 813–847, 881–915, 918–952, and 953–987; these read TAPVYNALVDLIVRDDDEKVPEEFLQQIRDDDKEV, FGEFLNVLVRKHCRNGSFSIALEELGRLKDFRFRP, SRSTYNCLIQAFLKADRLDSASLIHREMSLANLRM, DGFTLRCFAYSLCKVGKWREALTLVETENFV, DTVFYTKLISGLCEASLFEEAMDFLNRMRATSCLP, NVVTYSTLLCGCLNKKQLGRCKRVLNMMMMEGCYP, SPKIFNSLVHAYCTSGDHSYAYKLLKKMVKCGHMP, GYVV…GVVL, NKINVSSFTRCLCSAGKYEKAFSVIREMIGQGFIP, DTSTYSKVLNYLCNASKMELAFLLFEEMKRGGLVA, DVYTYTIMVDSFCKAGLIEQARKWFNEMREVGCTP, NVVTYTALIHAYLKAKKVSYANELFETMLSEGCLP, NIVTYSALIDGHCKAGQVEKACQIFERMCGSKDVP, NVVTYGALLDGFCKSHRVEEARKLLDAMSMEGCEP, NQIVYDALIDGLCKVGKLDEAQEVKTEMSEHGFPA, TLYTYSSLIDRYFKVKRQDLASKVLSKMLENSCAP, NVVIYTEMIDGLCKVGKTDEAYKLMQMMEEKGCQP, NVVTYTAMIDGFGMIGKIETCLELLERMGSKGVAP, NYVTYRVLIDHCCKNGALDVAHNLLEEMKQTHWPT, FLSVYRLLIDNLIKAQRLEMALRLLEEVATFSATL, YSSTYNSLIESLCLANKVETAFQLFSEMTKKGVIP, and EMQSFCSLIKGLFRNSKISEALLLLDFISHMVCPL.

This sequence belongs to the PPR family. P subfamily.

It localises to the mitochondrion. The protein is Pentatricopeptide repeat-containing protein At1g06710, mitochondrial of Arabidopsis thaliana (Mouse-ear cress).